The primary structure comprises 448 residues: Glucose-6-phosphate isomerase (448 aa).

The Proton donor role is filled by Glu290. Residues His311 and Lys425 contribute to the active site.

This sequence belongs to the GPI family.

It localises to the cytoplasm. The enzyme catalyses alpha-D-glucose 6-phosphate = beta-D-fructose 6-phosphate. Its pathway is carbohydrate biosynthesis; gluconeogenesis. The protein operates within carbohydrate degradation; glycolysis; D-glyceraldehyde 3-phosphate and glycerone phosphate from D-glucose: step 2/4. In terms of biological role, catalyzes the reversible isomerization of glucose-6-phosphate to fructose-6-phosphate. The sequence is that of Glucose-6-phosphate isomerase from Acetivibrio thermocellus (strain ATCC 27405 / DSM 1237 / JCM 9322 / NBRC 103400 / NCIMB 10682 / NRRL B-4536 / VPI 7372) (Clostridium thermocellum).